Here is a 311-residue protein sequence, read N- to C-terminus: MQRFIKWLAVITSLDLLIVLLGGALVTKTGSGQGCGKSWPLCNGEFVPSNLSMETIIELSHRLTSGSAGILVTLLCILSWKYYKHVRETKTLAILSFVFLVAQALMGAAAVVWGQMPAVLAIHFGISLISFASVILLTCLIFEIDQKFDARSLIMDKKMKFHIYGVTIYCYLVVYTGALVRHERASLACPDFPLCSKNRPMPTQLHEWVQMGHRLAAMLIFVWILYAMILAIRHYKQQPVVYWGWIISFILVTLQAIVGILVVFTNASLAMALLHSLFISCLFAVLCYLVMLGTRSKVNAKEAASTSKQTK.

Over 1–6 (MQRFIK) the chain is Cytoplasmic. A helical membrane pass occupies residues 7 to 27 (WLAVITSLDLLIVLLGGALVT). The Extracellular portion of the chain corresponds to 28-62 (KTGSGQGCGKSWPLCNGEFVPSNLSMETIIELSHR). The cysteines at positions 35 and 42 are disulfide-linked. E58 is an active-site residue. H61 lines the heme o pocket. The helical transmembrane segment at 63-83 (LTSGSAGILVTLLCILSWKYY) threads the bilayer. Over 84-91 (KHVRETKT) the chain is Cytoplasmic. Residues 92–112 (LAILSFVFLVAQALMGAAAVV) traverse the membrane as a helical segment. Topologically, residues 113-121 (WGQMPAVLA) are extracellular. A helical membrane pass occupies residues 122–142 (IHFGISLISFASVILLTCLIF). Residue H123 participates in heme o binding. Over 143 to 159 (EIDQKFDARSLIMDKKM) the chain is Cytoplasmic. The helical transmembrane segment at 160–180 (KFHIYGVTIYCYLVVYTGALV) threads the bilayer. The Extracellular portion of the chain corresponds to 181-211 (RHERASLACPDFPLCSKNRPMPTQLHEWVQM). Cysteines 189 and 195 form a disulfide. A helical transmembrane segment spans residues 212–232 (GHRLAAMLIFVWILYAMILAI). Position 213 (H213) interacts with heme b. The Cytoplasmic portion of the chain corresponds to 233 to 243 (RHYKQQPVVYW). Residues 244–264 (GWIISFILVTLQAIVGILVVF) form a helical membrane-spanning segment. The Extracellular segment spans residues 265 to 271 (TNASLAM). A helical transmembrane segment spans residues 272 to 292 (ALLHSLFISCLFAVLCYLVML). Position 275 (H275) interacts with heme b. The Cytoplasmic portion of the chain corresponds to 293–311 (GTRSKVNAKEAASTSKQTK).

Belongs to the COX15/CtaA family. Type 1 subfamily. In terms of assembly, interacts with CtaB. Heme b is required as a cofactor.

Its subcellular location is the cell membrane. It catalyses the reaction Fe(II)-heme o + 2 A + H2O = Fe(II)-heme a + 2 AH2. Its pathway is porphyrin-containing compound metabolism; heme A biosynthesis; heme A from heme O: step 1/1. Catalyzes the conversion of heme O to heme A by two successive hydroxylations of the methyl group at C8. The first hydroxylation forms heme I, the second hydroxylation results in an unstable dihydroxymethyl group, which spontaneously dehydrates, resulting in the formyl group of heme A. This is Heme A synthase from Bacillus cereus (strain 03BB102).